Reading from the N-terminus, the 299-residue chain is ATP phosphoribosyltransferase (299 aa).

It belongs to the ATP phosphoribosyltransferase family. Long subfamily. As to quaternary structure, equilibrium between an active dimeric form, an inactive hexameric form and higher aggregates. Interconversion between the various forms is largely reversible and is influenced by the natural substrates and inhibitors of the enzyme. The cofactor is Mg(2+).

The protein resides in the cytoplasm. The catalysed reaction is 1-(5-phospho-beta-D-ribosyl)-ATP + diphosphate = 5-phospho-alpha-D-ribose 1-diphosphate + ATP. It functions in the pathway amino-acid biosynthesis; L-histidine biosynthesis; L-histidine from 5-phospho-alpha-D-ribose 1-diphosphate: step 1/9. Its activity is regulated as follows. Feedback inhibited by histidine. Its function is as follows. Catalyzes the condensation of ATP and 5-phosphoribose 1-diphosphate to form N'-(5'-phosphoribosyl)-ATP (PR-ATP). Has a crucial role in the pathway because the rate of histidine biosynthesis seems to be controlled primarily by regulation of HisG enzymatic activity. The protein is ATP phosphoribosyltransferase of Escherichia coli O81 (strain ED1a).